We begin with the raw amino-acid sequence, 318 residues long: Very-long-chain 3-oxoacyl-CoA reductase-A (318 aa).

A helical transmembrane segment spans residues F15 to L35. G54–L83 is an NADP(+) binding site. A run of 2 helical transmembrane segments spans residues G187 to Y207 and A281 to M301. S194 is a binding site for substrate. Y207 acts as the Proton acceptor in catalysis.

Belongs to the short-chain dehydrogenases/reductases (SDR) family. 17-beta-HSD 3 subfamily.

Its subcellular location is the endoplasmic reticulum membrane. The catalysed reaction is a very-long-chain (3R)-3-hydroxyacyl-CoA + NADP(+) = a very-long-chain 3-oxoacyl-CoA + NADPH + H(+). The enzyme catalyses 17beta-estradiol + NAD(+) = estrone + NADH + H(+). It catalyses the reaction 17beta-estradiol + NADP(+) = estrone + NADPH + H(+). Its pathway is lipid metabolism; fatty acid biosynthesis. It participates in steroid biosynthesis; estrogen biosynthesis. Its function is as follows. Catalyzes the second of the four reactions of the long-chain fatty acids elongation cycle. This endoplasmic reticulum-bound enzymatic process, allows the addition of two carbons to the chain of long- and very long-chain fatty acids/VLCFAs per cycle. This enzyme has a 3-ketoacyl-CoA reductase activity, reducing 3-ketoacyl-CoA to 3-hydroxyacyl-CoA, within each cycle of fatty acid elongation. Thereby, it may participate in the production of VLCFAs of different chain lengths that are involved in multiple biological processes as precursors of membrane lipids and lipid mediators. May also catalyze the transformation of estrone (E1) into estradiol (E2) and play a role in estrogen formation. This Xenopus laevis (African clawed frog) protein is Very-long-chain 3-oxoacyl-CoA reductase-A (hsd17b12-a).